Consider the following 301-residue polypeptide: MDDVENGVADVFEKQAAFLSSALPYMQKYENETVVVKYGGHAMGDPALGRAFARDIALLKQSGINPVVVHGGGPQIAEILMKMGIESRFENGLRVTDERIVEVVEMVLAGSINKEIVALINAEGEWAIGLCGKDGNMVFAEKAYKTVIDPDSHIERVLDLGFVGEPVEVDRTLLDLLACSEMIPVLAPVAPGRDGKTYNINADIFAGAIAGALEAKRLLFLTDVPGVLDKKGKLLKELTISEAENLIKNETISGGMIPKVETCMKALQNGVEAVVILNGRTPHSVLLELFTEQGAGTLIVS.

Substrate contacts are provided by residues 72-73 (GG), arginine 94, and asparagine 199.

Belongs to the acetylglutamate kinase family. ArgB subfamily.

The protein localises to the cytoplasm. It catalyses the reaction N-acetyl-L-glutamate + ATP = N-acetyl-L-glutamyl 5-phosphate + ADP. Its pathway is amino-acid biosynthesis; L-arginine biosynthesis; N(2)-acetyl-L-ornithine from L-glutamate: step 2/4. Functionally, catalyzes the ATP-dependent phosphorylation of N-acetyl-L-glutamate. The sequence is that of Acetylglutamate kinase from Bartonella henselae (strain ATCC 49882 / DSM 28221 / CCUG 30454 / Houston 1) (Rochalimaea henselae).